We begin with the raw amino-acid sequence, 466 residues long: 3-isopropylmalate dehydratase large subunit (466 aa).

The [4Fe-4S] cluster site is built by Cys-347, Cys-407, and Cys-410.

Belongs to the aconitase/IPM isomerase family. LeuC type 1 subfamily. Heterodimer of LeuC and LeuD. [4Fe-4S] cluster is required as a cofactor.

The catalysed reaction is (2R,3S)-3-isopropylmalate = (2S)-2-isopropylmalate. It functions in the pathway amino-acid biosynthesis; L-leucine biosynthesis; L-leucine from 3-methyl-2-oxobutanoate: step 2/4. In terms of biological role, catalyzes the isomerization between 2-isopropylmalate and 3-isopropylmalate, via the formation of 2-isopropylmaleate. In Enterobacter sp. (strain 638), this protein is 3-isopropylmalate dehydratase large subunit.